A 734-amino-acid polypeptide reads, in one-letter code: Photosystem I P700 chlorophyll a apoprotein A2 (734 aa).

The next 8 helical transmembrane spans lie at 46–69 (IFASHFGQLAIIFLWTSGNLFHVA), 135–158 (LYTGALFLLFLSALSLIGGWLHLQ), 175–199 (LNHHLSGLFGVSSLAWTGHLVHVAI), 273–291 (MAHHHLAIAILFLIAGHMY), 330–353 (IHFQLGLALASLGVITSLVAQHMY), 369–395 (AALYTHHQYIAGFIMTGAFAHGAIFFI), 417–439 (AIISHLSWASLFLGFHTLGLYVH), and 517–535 (FLVHHAIALGLHTTTLILV). [4Fe-4S] cluster is bound by residues Cys559 and Cys568. The next 2 helical transmembrane spans lie at 575 to 596 (AFYLAVFWMLNTIGWVTFYWHW) and 643 to 665 (LSVWAWMFLFGHLVWATGFMFLI). The chlorophyll a site is built by His654, Met662, and Tyr670. Trp671 is a binding site for phylloquinone. A helical transmembrane segment spans residues 707–727 (LVGLAHFSVGYIFTYAAFLIA).

This sequence belongs to the PsaA/PsaB family. As to quaternary structure, the PsaA/B heterodimer binds the P700 chlorophyll special pair and subsequent electron acceptors. PSI consists of a core antenna complex that captures photons, and an electron transfer chain that converts photonic excitation into a charge separation. The eukaryotic PSI reaction center is composed of at least 11 subunits. The cofactor is P700 is a chlorophyll a/chlorophyll a' dimer, A0 is one or more chlorophyll a, A1 is one or both phylloquinones and FX is a shared 4Fe-4S iron-sulfur center..

It is found in the plastid. The protein resides in the chloroplast thylakoid membrane. The enzyme catalyses reduced [plastocyanin] + hnu + oxidized [2Fe-2S]-[ferredoxin] = oxidized [plastocyanin] + reduced [2Fe-2S]-[ferredoxin]. In terms of biological role, psaA and PsaB bind P700, the primary electron donor of photosystem I (PSI), as well as the electron acceptors A0, A1 and FX. PSI is a plastocyanin-ferredoxin oxidoreductase, converting photonic excitation into a charge separation, which transfers an electron from the donor P700 chlorophyll pair to the spectroscopically characterized acceptors A0, A1, FX, FA and FB in turn. Oxidized P700 is reduced on the lumenal side of the thylakoid membrane by plastocyanin. This is Photosystem I P700 chlorophyll a apoprotein A2 from Lepidium virginicum (Virginia pepperweed).